The sequence spans 206 residues: Dephospho-CoA kinase (206 aa).

The region spanning 4–204 (IVGLTGGIGS…HQYLQLANAQ (201 aa)) is the DPCK domain. 12–17 (GSGKST) is a binding site for ATP.

It belongs to the CoaE family.

It is found in the cytoplasm. The catalysed reaction is 3'-dephospho-CoA + ATP = ADP + CoA + H(+). It participates in cofactor biosynthesis; coenzyme A biosynthesis; CoA from (R)-pantothenate: step 5/5. Catalyzes the phosphorylation of the 3'-hydroxyl group of dephosphocoenzyme A to form coenzyme A. In Pasteurella multocida (strain Pm70), this protein is Dephospho-CoA kinase.